The following is a 208-amino-acid chain: Large ribosomal subunit protein uL4 (208 aa).

The disordered stretch occupies residues Arg-45–Ser-84. Positions Gly-60–Gly-71 are enriched in basic residues.

Belongs to the universal ribosomal protein uL4 family. Part of the 50S ribosomal subunit.

Its function is as follows. One of the primary rRNA binding proteins, this protein initially binds near the 5'-end of the 23S rRNA. It is important during the early stages of 50S assembly. It makes multiple contacts with different domains of the 23S rRNA in the assembled 50S subunit and ribosome. In terms of biological role, forms part of the polypeptide exit tunnel. The sequence is that of Large ribosomal subunit protein uL4 from Prosthecochloris aestuarii (strain DSM 271 / SK 413).